Here is a 97-residue protein sequence, read N- to C-terminus: Large ribosomal subunit protein uL23 (97 aa).

This sequence belongs to the universal ribosomal protein uL23 family. As to quaternary structure, part of the 50S ribosomal subunit. Contacts protein L29, and trigger factor when it is bound to the ribosome.

One of the early assembly proteins it binds 23S rRNA. One of the proteins that surrounds the polypeptide exit tunnel on the outside of the ribosome. Forms the main docking site for trigger factor binding to the ribosome. The chain is Large ribosomal subunit protein uL23 from Brucella abortus (strain S19).